We begin with the raw amino-acid sequence, 221 residues long: Protein Thf1 (221 aa).

Residues 174–213 are a coiled coil; that stretch reads TKERVEKDVNLYKSSLDKIEKALELIEMNIKDEKRRNKER.

The protein belongs to the THF1 family.

In terms of biological role, may be involved in photosynthetic membrane biogenesis. The polypeptide is Protein Thf1 (Prochlorococcus marinus (strain MIT 9211)).